The following is a 169-amino-acid chain: Major pepsin inhibitor 3 (169 aa).

The signal sequence occupies residues 1-20 (MHVWLILSLASLWTSSIAYS). Gln21 bears the Pyrrolidone carboxylic acid mark. 3 cysteine pairs are disulfide-bonded: Cys33-Cys79, Cys68-Cys86, and Cys99-Cys166. Positions 135–169 (EEQQENQPPSSGMPHGAVPAGGLSPPPPPSFCTVQ) are disordered. The segment covering 158–169 (SPPPPPSFCTVQ) has biased composition (pro residues).

The protein belongs to the protease inhibitor I33 family. In terms of tissue distribution, body wall.

The protein localises to the secreted. Its function is as follows. This is an inhibitor of the aspartic protease pepsin. This Ascaris suum (Pig roundworm) protein is Major pepsin inhibitor 3.